We begin with the raw amino-acid sequence, 505 residues long: Probable inorganic carbon transporter subunit DabB (505 aa).

13 helical membrane passes run 9 to 29 (SLLT…LLFL), 37 to 57 (FVRI…LILA), 68 to 88 (WHLD…GFII), 105 to 123 (YFTL…WLSG), 162 to 182 (LFLL…HATG), 204 to 224 (TGIQ…WPFQ), 231 to 251 (IVAP…AGGI), 259 to 279 (LFHG…SVLI), 303 to 323 (GFML…HLIL), 355 to 375 (LWVM…WLTA), 382 to 402 (LISA…LVAF), 410 to 430 (IAGL…HHLF), and 446 to 466 (MSAV…GTWV).

This sequence belongs to the inorganic carbon transporter (TC 9.A.2) DabB family. As to quaternary structure, forms a complex with DabA.

The protein resides in the cell membrane. Its function is as follows. Part of an energy-coupled inorganic carbon pump. The polypeptide is Probable inorganic carbon transporter subunit DabB (Bacillus subtilis (strain 168)).